A 156-amino-acid polypeptide reads, in one-letter code: 6,7-dimethyl-8-ribityllumazine synthase (156 aa).

Residues Phe-23, 57 to 59 (AFE), and 81 to 83 (AII) each bind 5-amino-6-(D-ribitylamino)uracil. (2S)-2-hydroxy-3-oxobutyl phosphate is bound at residue 86–87 (ST). His-89 functions as the Proton donor in the catalytic mechanism. Phe-114 serves as a coordination point for 5-amino-6-(D-ribitylamino)uracil. Arg-128 serves as a coordination point for (2S)-2-hydroxy-3-oxobutyl phosphate.

It belongs to the DMRL synthase family.

It catalyses the reaction (2S)-2-hydroxy-3-oxobutyl phosphate + 5-amino-6-(D-ribitylamino)uracil = 6,7-dimethyl-8-(1-D-ribityl)lumazine + phosphate + 2 H2O + H(+). The protein operates within cofactor biosynthesis; riboflavin biosynthesis; riboflavin from 2-hydroxy-3-oxobutyl phosphate and 5-amino-6-(D-ribitylamino)uracil: step 1/2. Catalyzes the formation of 6,7-dimethyl-8-ribityllumazine by condensation of 5-amino-6-(D-ribitylamino)uracil with 3,4-dihydroxy-2-butanone 4-phosphate. This is the penultimate step in the biosynthesis of riboflavin. The chain is 6,7-dimethyl-8-ribityllumazine synthase from Wolinella succinogenes (strain ATCC 29543 / DSM 1740 / CCUG 13145 / JCM 31913 / LMG 7466 / NCTC 11488 / FDC 602W) (Vibrio succinogenes).